A 212-amino-acid polypeptide reads, in one-letter code: Phosphoribosylglycinamide formyltransferase (212 aa).

Residue 11-13 (GSN) participates in N(1)-(5-phospho-beta-D-ribosyl)glycinamide binding. (6R)-10-formyltetrahydrofolate contacts are provided by residues arginine 64, 89 to 92 (MRIL), and asparagine 106. Histidine 108 (proton donor) is an active-site residue. 140–144 (TDELD) is a (6R)-10-formyltetrahydrofolate binding site. A N(1)-(5-phospho-beta-D-ribosyl)glycinamide-binding site is contributed by 170-173 (QTQE).

The protein belongs to the GART family. In terms of assembly, monomer. Homodimer below pH 6.8.

It carries out the reaction N(1)-(5-phospho-beta-D-ribosyl)glycinamide + (6R)-10-formyltetrahydrofolate = N(2)-formyl-N(1)-(5-phospho-beta-D-ribosyl)glycinamide + (6S)-5,6,7,8-tetrahydrofolate + H(+). It participates in purine metabolism; IMP biosynthesis via de novo pathway; N(2)-formyl-N(1)-(5-phospho-D-ribosyl)glycinamide from N(1)-(5-phospho-D-ribosyl)glycinamide (10-formyl THF route): step 1/1. Its activity is regulated as follows. Inhibited by N10-(bromoacetyl)-5,8-dideazafolate. Its function is as follows. Catalyzes the transfer of a formyl group from 10-formyltetrahydrofolate to 5-phospho-ribosyl-glycinamide (GAR), producing 5-phospho-ribosyl-N-formylglycinamide (FGAR) and tetrahydrofolate. The sequence is that of Phosphoribosylglycinamide formyltransferase from Escherichia coli (strain K12).